A 355-amino-acid chain; its full sequence is Phospho-N-acetylmuramoyl-pentapeptide-transferase (355 aa).

The next 10 membrane-spanning stretches (helical) occupy residues 3–23 (GVLI…PWVI), 56–76 (VIIV…GIGF), 80–100 (GLLV…DDYI), 120–140 (AAVA…AGLL), 156–176 (VGII…SNAV), 185–205 (LAAG…FWQF), 224–244 (PLDV…FLWW), 251–271 (IFMG…IAIV), 276–296 (LLLV…MIQV), and 330–350 (FWIV…AEFL).

Belongs to the glycosyltransferase 4 family. MraY subfamily. The cofactor is Mg(2+).

The protein localises to the cell membrane. The enzyme catalyses UDP-N-acetyl-alpha-D-muramoyl-L-alanyl-gamma-D-glutamyl-meso-2,6-diaminopimeloyl-D-alanyl-D-alanine + di-trans,octa-cis-undecaprenyl phosphate = di-trans,octa-cis-undecaprenyl diphospho-N-acetyl-alpha-D-muramoyl-L-alanyl-D-glutamyl-meso-2,6-diaminopimeloyl-D-alanyl-D-alanine + UMP. Its pathway is cell wall biogenesis; peptidoglycan biosynthesis. In terms of biological role, catalyzes the initial step of the lipid cycle reactions in the biosynthesis of the cell wall peptidoglycan: transfers peptidoglycan precursor phospho-MurNAc-pentapeptide from UDP-MurNAc-pentapeptide onto the lipid carrier undecaprenyl phosphate, yielding undecaprenyl-pyrophosphoryl-MurNAc-pentapeptide, known as lipid I. This chain is Phospho-N-acetylmuramoyl-pentapeptide-transferase, found in Frankia casuarinae (strain DSM 45818 / CECT 9043 / HFP020203 / CcI3).